A 78-amino-acid polypeptide reads, in one-letter code: Exodeoxyribonuclease 7 small subunit (78 aa).

Belongs to the XseB family. Heterooligomer composed of large and small subunits.

Its subcellular location is the cytoplasm. It catalyses the reaction Exonucleolytic cleavage in either 5'- to 3'- or 3'- to 5'-direction to yield nucleoside 5'-phosphates.. Its function is as follows. Bidirectionally degrades single-stranded DNA into large acid-insoluble oligonucleotides, which are then degraded further into small acid-soluble oligonucleotides. In Cutibacterium acnes (strain DSM 16379 / KPA171202) (Propionibacterium acnes), this protein is Exodeoxyribonuclease 7 small subunit.